Here is a 658-residue protein sequence, read N- to C-terminus: Biosynthetic arginine decarboxylase (658 aa).

The residue at position 127 (Lys127) is an N6-(pyridoxal phosphate)lysine. 307–317 (FDVGGGLGVDY) is a substrate binding site.

This sequence belongs to the Orn/Lys/Arg decarboxylase class-II family. SpeA subfamily. Requires Mg(2+) as cofactor. Pyridoxal 5'-phosphate serves as cofactor.

The catalysed reaction is L-arginine + H(+) = agmatine + CO2. It participates in amine and polyamine biosynthesis; agmatine biosynthesis; agmatine from L-arginine: step 1/1. Catalyzes the biosynthesis of agmatine from arginine. In Salmonella typhi, this protein is Biosynthetic arginine decarboxylase.